The following is a 510-amino-acid chain: UDP-N-acetylmuramoylalanine--D-glutamate ligase (510 aa).

Residue 138-144 (GTNGKTT) coordinates ATP. The interval 294 to 316 (FDEPAPAPRRKKDAPPPTRAGGR) is disordered.

Belongs to the MurCDEF family.

It is found in the cytoplasm. The enzyme catalyses UDP-N-acetyl-alpha-D-muramoyl-L-alanine + D-glutamate + ATP = UDP-N-acetyl-alpha-D-muramoyl-L-alanyl-D-glutamate + ADP + phosphate + H(+). It functions in the pathway cell wall biogenesis; peptidoglycan biosynthesis. Its function is as follows. Cell wall formation. Catalyzes the addition of glutamate to the nucleotide precursor UDP-N-acetylmuramoyl-L-alanine (UMA). The protein is UDP-N-acetylmuramoylalanine--D-glutamate ligase of Bordetella bronchiseptica (strain ATCC BAA-588 / NCTC 13252 / RB50) (Alcaligenes bronchisepticus).